A 494-amino-acid chain; its full sequence is Alpha-amylase-related protein (494 aa).

An N-terminal signal peptide occupies residues 1–20; the sequence is MFKFALALTLCLAGASLSLA. The residue at position 21 (Q21) is a Pyrrolidone carboxylic acid. C48 and C104 form a disulfide bridge. Positions 118, 169, and 178 each coordinate Ca(2+). C157 and C171 form a disulfide bridge. R206 lines the chloride pocket. The active-site Nucleophile is D208. H212 lines the Ca(2+) pocket. The active-site Proton donor is E245. 2 residues coordinate chloride: N308 and R343. Disulfide bonds link C376–C382, C418–C441, and C448–C460.

It belongs to the glycosyl hydrolase 13 family. As to quaternary structure, monomer. Requires Ca(2+) as cofactor. Chloride is required as a cofactor.

It localises to the secreted. It catalyses the reaction Endohydrolysis of (1-&gt;4)-alpha-D-glucosidic linkages in polysaccharides containing three or more (1-&gt;4)-alpha-linked D-glucose units.. This chain is Alpha-amylase-related protein (Amyrel), found in Drosophila punjabiensis (Fruit fly).